Reading from the N-terminus, the 139-residue chain is MTEQTLVLIKPDGVSRGLVGEVLARIERKGLKIAALELKQVSDELAREHYAEHADKPFFGSLIEFITSGPVVAAVLEGPRAIAAFRQLAGGTDPVEKAAPGSIRGDFGLETQYNLVHGSDSPESAKREIGLWFPEFPVA.

Residues Lys-10, Phe-58, Arg-86, Thr-92, Arg-104, and Asn-114 each coordinate ATP. His-117 (pros-phosphohistidine intermediate) is an active-site residue.

The protein belongs to the NDK family. In terms of assembly, homotetramer. It depends on Mg(2+) as a cofactor.

It is found in the cytoplasm. It carries out the reaction a 2'-deoxyribonucleoside 5'-diphosphate + ATP = a 2'-deoxyribonucleoside 5'-triphosphate + ADP. It catalyses the reaction a ribonucleoside 5'-diphosphate + ATP = a ribonucleoside 5'-triphosphate + ADP. Major role in the synthesis of nucleoside triphosphates other than ATP. The ATP gamma phosphate is transferred to the NDP beta phosphate via a ping-pong mechanism, using a phosphorylated active-site intermediate. The polypeptide is Nucleoside diphosphate kinase (Nocardia farcinica (strain IFM 10152)).